The following is a 418-amino-acid chain: Tyrosine--tRNA ligase (418 aa).

Tyr-34 serves as a coordination point for L-tyrosine. A 'HIGH' region motif is present at residues 39 to 48 (PTADSLHLGH). 2 residues coordinate L-tyrosine: Tyr-169 and Gln-173. A 'KMSKS' region motif is present at residues 229–233 (KFGKS). Lys-232 is a binding site for ATP. Residues 352 to 418 (LNLVDMLVTA…GKKKYAVLTY (67 aa)) enclose the S4 RNA-binding domain.

The protein belongs to the class-I aminoacyl-tRNA synthetase family. TyrS type 1 subfamily. Homodimer.

The protein resides in the cytoplasm. The catalysed reaction is tRNA(Tyr) + L-tyrosine + ATP = L-tyrosyl-tRNA(Tyr) + AMP + diphosphate + H(+). Its function is as follows. Catalyzes the attachment of tyrosine to tRNA(Tyr) in a two-step reaction: tyrosine is first activated by ATP to form Tyr-AMP and then transferred to the acceptor end of tRNA(Tyr). The protein is Tyrosine--tRNA ligase of Streptococcus pyogenes serotype M12 (strain MGAS2096).